A 361-amino-acid chain; its full sequence is MPHNTKSMDNTLNIKDNHVQIGGRKSKLAVVQSEIVKECIVEKFPELSCSVLALSTLGDKVQSKPLYSFGGKALWTKELEILLLEQVEEYPRLDLIVHSLKDIPTNLPEEFELGCILNREDARDALVMKSGSSYKSLADLPDGSLVGTSSVRRSSQLLKNHPKLRFDSVRGNLQTRLNKLDDENSPFECLLLASAGLIRIGLGDRITAHLDAPEMYYAVGQGALGIEIRKGDEKMLQLLKTIEDLPTTYCCLAERSLMRHLEGGCSVPIGVQSHYNESTNELSLKAIIVSPDGIHFVEDEYKGVVNNKDDADAIGIKVGDLLSAKGGREILNSINFERINLPPSSNTPTPQPITPITTNNS.

Position 265 is an S-(dipyrrolylmethanemethyl)cysteine (Cys265). The interval 341–361 (LPPSSNTPTPQPITPITTNNS) is disordered.

It belongs to the HMBS family. Dipyrromethane serves as cofactor.

The catalysed reaction is 4 porphobilinogen + H2O = hydroxymethylbilane + 4 NH4(+). It functions in the pathway porphyrin-containing compound metabolism; protoporphyrin-IX biosynthesis; coproporphyrinogen-III from 5-aminolevulinate: step 2/4. Functionally, tetrapolymerization of the monopyrrole PBG into the hydroxymethylbilane pre-uroporphyrinogen in several discrete steps. The sequence is that of Porphobilinogen deaminase (HEM3) from Debaryomyces hansenii (strain ATCC 36239 / CBS 767 / BCRC 21394 / JCM 1990 / NBRC 0083 / IGC 2968) (Yeast).